The sequence spans 207 residues: ADP-ribosylation factor (207 aa).

Gly-2 carries the N-myristoyl glycine lipid modification. GTP-binding positions include 32 to 39 (GLDGAGKT), 75 to 79 (DIGGQ), and 133 to 136 (NKID).

It belongs to the small GTPase superfamily. Arf family.

It localises to the golgi apparatus. Its function is as follows. GTP-binding protein involved in protein trafficking; may modulate vesicle budding and uncoating within the Golgi apparatus. This Encephalitozoon cuniculi (strain GB-M1) (Microsporidian parasite) protein is ADP-ribosylation factor (ARF-1).